The chain runs to 215 residues: MTKLTARQQQVFDLIRRAIERSGFPPTRAEIAAELGFSSPNAAEEHLRALARKGVIELAAGASRGIRLLGIEDAPHQFTLPHAGLMQLSLPLVGRVAAGSPILAQEHISQHYACDPALFTSKPDYLLKVRGLSMRDAGILDGDLLAVQKRTEAKDGQIIVARLGDDVTVKRLMRRPGGLELIAENPDYENIFVKAGSAEFALEGIAVGLIRSGEL.

The segment at residues 28–48 (RAEIAAELGFSSPNAAEEHLR) is a DNA-binding region (H-T-H motif). Active-site for autocatalytic cleavage activity residues include S133 and K170.

The protein belongs to the peptidase S24 family. In terms of assembly, homodimer.

It carries out the reaction Hydrolysis of Ala-|-Gly bond in repressor LexA.. Represses a number of genes involved in the response to DNA damage (SOS response), including recA and lexA. In the presence of single-stranded DNA, RecA interacts with LexA causing an autocatalytic cleavage which disrupts the DNA-binding part of LexA, leading to derepression of the SOS regulon and eventually DNA repair. The polypeptide is LexA repressor (Burkholderia ambifaria (strain ATCC BAA-244 / DSM 16087 / CCUG 44356 / LMG 19182 / AMMD) (Burkholderia cepacia (strain AMMD))).